A 208-amino-acid polypeptide reads, in one-letter code: Imidazole glycerol phosphate synthase subunit HisH (208 aa).

One can recognise a Glutamine amidotransferase type-1 domain in the interval 1–206 (MIVIIDYDTG…KEVIRSCKSS (206 aa)). The active-site Nucleophile is cysteine 79. Residues histidine 181 and glutamate 183 contribute to the active site.

As to quaternary structure, heterodimer of HisH and HisF.

The protein resides in the cytoplasm. The enzyme catalyses 5-[(5-phospho-1-deoxy-D-ribulos-1-ylimino)methylamino]-1-(5-phospho-beta-D-ribosyl)imidazole-4-carboxamide + L-glutamine = D-erythro-1-(imidazol-4-yl)glycerol 3-phosphate + 5-amino-1-(5-phospho-beta-D-ribosyl)imidazole-4-carboxamide + L-glutamate + H(+). It carries out the reaction L-glutamine + H2O = L-glutamate + NH4(+). It participates in amino-acid biosynthesis; L-histidine biosynthesis; L-histidine from 5-phospho-alpha-D-ribose 1-diphosphate: step 5/9. IGPS catalyzes the conversion of PRFAR and glutamine to IGP, AICAR and glutamate. The HisH subunit catalyzes the hydrolysis of glutamine to glutamate and ammonia as part of the synthesis of IGP and AICAR. The resulting ammonia molecule is channeled to the active site of HisF. In Listeria monocytogenes serotype 4b (strain CLIP80459), this protein is Imidazole glycerol phosphate synthase subunit HisH.